Consider the following 338-residue polypeptide: MRVFYDKDCDLSIIQGKKVAIIGYGSQGHAHACNLKDSGVDVTVGLRSGSATVAKAEAHGLKVADVKTAVAAADVVMILTPDEFQGRLYKEEIEPNLKKGATLAFAHGFSIHYNQVVPRADLDVIMIAPKAPGHTVRSEFVKGGGIPDLIAIYQDASGNAKNVALSYACGVGGGRTGIIETTFKDETETDLFGEQAVLCGGCVELVKAGFETLVEAGYAPEMAYFECLHELKLIVDLMYEGGIANMNYSISNNAEYGEYVTGPEVINAESRAAMRNALKRIQDGEYAKMFITEGAANYPSMTAYRRNNAAHPIEQIGEKLRAMMPWIAANKIVDKSKN.

In terms of domain architecture, KARI N-terminal Rossmann spans 1–181; it reads MRVFYDKDCD…GGGRTGIIET (181 aa). Residues 24–27, Arg47, Ser50, Thr52, and 82–85 contribute to the NADP(+) site; these read YGSQ and DEFQ. His107 is a catalytic residue. Gly133 contributes to the NADP(+) binding site. One can recognise a KARI C-terminal knotted domain in the interval 182–327; the sequence is TFKDETETDL…EKLRAMMPWI (146 aa). Asp190, Glu194, Glu226, and Glu230 together coordinate Mg(2+). Ser251 provides a ligand contact to substrate.

It belongs to the ketol-acid reductoisomerase family. Mg(2+) serves as cofactor.

The enzyme catalyses (2R)-2,3-dihydroxy-3-methylbutanoate + NADP(+) = (2S)-2-acetolactate + NADPH + H(+). It catalyses the reaction (2R,3R)-2,3-dihydroxy-3-methylpentanoate + NADP(+) = (S)-2-ethyl-2-hydroxy-3-oxobutanoate + NADPH + H(+). The protein operates within amino-acid biosynthesis; L-isoleucine biosynthesis; L-isoleucine from 2-oxobutanoate: step 2/4. It functions in the pathway amino-acid biosynthesis; L-valine biosynthesis; L-valine from pyruvate: step 2/4. Involved in the biosynthesis of branched-chain amino acids (BCAA). Catalyzes an alkyl-migration followed by a ketol-acid reduction of (S)-2-acetolactate (S2AL) to yield (R)-2,3-dihydroxy-isovalerate. In the isomerase reaction, S2AL is rearranged via a Mg-dependent methyl migration to produce 3-hydroxy-3-methyl-2-ketobutyrate (HMKB). In the reductase reaction, this 2-ketoacid undergoes a metal-dependent reduction by NADPH to yield (R)-2,3-dihydroxy-isovalerate. The sequence is that of Ketol-acid reductoisomerase (NADP(+)) from Pseudomonas aeruginosa (strain LESB58).